Consider the following 247-residue polypeptide: Exosome complex component Rrp4 (247 aa).

One can recognise an S1 motif domain in the interval 75-148; the sequence is DDLVIGIVEN…RDPVITVKGK (74 aa). The region spanning 154-220 is the KH domain; the sequence is TEGVVVDVKP…QAIKLIELKA (67 aa).

Belongs to the RRP4 family. As to quaternary structure, component of the archaeal exosome complex. Forms a trimer of Rrp4 and/or Csl4 subunits. The trimer associates with a hexameric ring-like arrangement composed of 3 Rrp41-Rrp42 heterodimers.

Its subcellular location is the cytoplasm. Non-catalytic component of the exosome, which is a complex involved in RNA degradation. Increases the RNA binding and the efficiency of RNA degradation. Confers strong poly(A) specificity to the exosome. The chain is Exosome complex component Rrp4 from Thermosphaera aggregans (strain DSM 11486 / M11TL).